A 273-amino-acid polypeptide reads, in one-letter code: CUE domain-containing protein 2-A (273 aa).

The disordered stretch occupies residues 92–121; sequence GKENVSPKPTAEVSFMTPTSSSTESSKKIE. A CUE domain is found at 135–178; that stretch reads DAKNGIDLLLEIFPSCTVSQAQTALSMAKGDLEDAVQIIVDGKV.

Belongs to the CUEDC2 family. Post-translationally, phosphorylated.

The protein resides in the cytoplasm. The protein localises to the nucleus. Its function is as follows. May play a role in targeting proteins for ubiquitination and subsequent proteasomal degradation. The polypeptide is CUE domain-containing protein 2-A (cuedc2-a) (Xenopus laevis (African clawed frog)).